Here is a 91-residue protein sequence, read N- to C-terminus: Potassium channel toxin TdiKIK (91 aa).

Positions 1-25 (MVATNRCCVFALLVALLLIHSLAEA) are cleaved as a signal peptide. The propeptide occupies 26-44 (GKGKEVLGKIKNKLVEVKE). The region spanning 58–91 (EYACPVIDKFCEDHCAAKNAIGKCDDFKCQCLNS) is the BetaSPN-type CS-alpha/beta domain. Cystine bridges form between Cys-61-Cys-81, Cys-68-Cys-86, and Cys-72-Cys-88.

Expressed by the venom gland.

The protein resides in the secreted. Functionally, the full peptide presents antibacterial and cytotoxic activities. The synthetic C-terminus (AA 33-76) inhibits voltage-gated potassium channels Kv1.1/KCNA1, Kv1.2/KCNA2, and Kv1.3/KCNA3. This Tityus discrepans (Venezuelan scorpion) protein is Potassium channel toxin TdiKIK.